The primary structure comprises 1380 residues: Respiration factor 2 (1380 aa).

2 consecutive C2H2-type zinc fingers follow at residues 151-173 (FLCPTCTRGFVRQEHLKRHQHSH) and 179-202 (YLCIFCGRCFARRDLVLRHQQKLH). The tract at residues 208-231 (TGDPRRMTPAPNSTSSFASKRRHS) is disordered. Residues Ser231 and Ser322 each carry the phosphoserine modification. Disordered stretches follow at residues 413 to 445 (NLNLFNNDPSGQQQQQQQQQQNSTSSTIVNSNN), 544 to 584 (SPKN…NIDP), 624 to 643 (SRSSIPNKSPPNHSATSLNH), and 652 to 688 (LNLSLNGSTDLPSTPQNQLKEPSYSDPISHSSHKRRR). Low complexity predominate over residues 424-445 (QQQQQQQQQQNSTSSTIVNSNN). Position 544 is a phosphoserine (Ser544). Residues 544–569 (SPKNPPTTVSDSSSTINFNPGTNNLL) are compositionally biased toward polar residues. Residues 575–584 (PNDKDSNIDP) are compositionally biased toward basic and acidic residues. Low complexity predominate over residues 624 to 634 (SRSSIPNKSPP). Position 632 is a phosphoserine (Ser632). Residues 652-681 (LNLSLNGSTDLPSTPQNQLKEPSYSDPISH) are compositionally biased toward polar residues.

The protein belongs to the RSF2/TDA9 family.

The protein localises to the nucleus. In terms of biological role, transcription factor that regulates expression of both nuclear and mitochondrial genes, and more specifically those required for glycerol-based growth and respiration. The chain is Respiration factor 2 (RSF2) from Saccharomyces cerevisiae (strain ATCC 204508 / S288c) (Baker's yeast).